The sequence spans 1159 residues: Ferroxidase HEPHL1 (1159 aa).

The first 23 residues, 1-23 (MFLKQPGGCILLQFLGLLGLVGA), serve as a signal peptide directing secretion. 6 consecutive Plastocyanin-like domains span residues 24–206 (VTRT…LLVC), 217–365 (MRTD…VGNC), 378–560 (QRRY…LLVC), 570–718 (TQKG…ISSC), 730–906 (MLRT…LITC), and 914–1092 (KGRR…VPSQ). At 24 to 1114 (VTRTYYIGIV…KNLRPRGAKA (1091 aa)) the chain is on the extracellular side. Residues His-126 and His-128 each contribute to the Cu cation site. N-linked (GlcNAc...) asparagine glycosylation is present at Asn-160. A disulfide bridge connects residues Cys-180 and Cys-206. 2 residues coordinate Cu cation: His-186 and His-188. The N-linked (GlcNAc...) asparagine glycan is linked to Asn-235. Cys-284 and Cys-365 are joined by a disulfide. Positions 303, 346, and 351 each coordinate Cu cation. Asn-406 carries an N-linked (GlcNAc...) asparagine glycan. Cys-534 and Cys-560 form a disulfide bridge. Asn-588 carries an N-linked (GlcNAc...) asparagine glycan. A disulfide bridge connects residues Cys-637 and Cys-718. Cu cation is bound by residues His-656, Cys-699, His-704, and Met-709. N-linked (GlcNAc...) asparagine glycosylation is present at Asn-771. Cysteines 880 and 906 form a disulfide. The N-linked (GlcNAc...) asparagine glycan is linked to Asn-934. The Cu cation site is built by His-1002, His-1005, His-1007, His-1047, Cys-1048, His-1049, His-1053, and Met-1058. The chain crosses the membrane as a helical span at residues 1115 to 1135 (ALVILFILGLLLLVATVVLAL). Residues 1136–1159 (RLRSSRRQMAYREVQSCALPTDAL) lie on the Cytoplasmic side of the membrane.

The protein belongs to the multicopper oxidase family. The cofactor is Cu cation.

Its subcellular location is the membrane. It catalyses the reaction 4 Fe(2+) + O2 + 4 H(+) = 4 Fe(3+) + 2 H2O. Its function is as follows. Is a copper-binding glycoprotein with ferroxidase activity. It oxidizes Fe(2+) to Fe(3+) without releasing radical oxygen species. May be involved in the regulation of intracellular iron content. The sequence is that of Ferroxidase HEPHL1 (Hephl1) from Mus musculus (Mouse).